The following is a 356-amino-acid chain: MSL complex subunit 3B (356 aa).

Residues 2–350 (EERTVTLEIP…SEVHYSTRNP (349 aa)) form the MRG domain. Disordered stretches follow at residues 135-210 (TNRS…WQQD) and 225-247 (KTPV…SPVF). The span at 142-156 (LSPSLRLLNPSRPQS) shows a compositional bias: low complexity. Composition is skewed to polar residues over residues 178–189 (AVQSLRRSSPHT) and 229–243 (HSRS…SQEG).

It is found in the nucleus. In terms of biological role, probable non-catalytic component of the MSL histone acetyltransferase complex, a multiprotein complex that mediates the majority of histone H4 acetylation at 'Lys-16' (H4K16ac), an epigenetic mark that prevents chromatin compaction. The sequence is that of MSL complex subunit 3B from Homo sapiens (Human).